The following is a 108-amino-acid chain: uncharacterized protein (108 aa).

Residues 1–21 (MFRSLFLAAALMAFTPLAANA) form the signal peptide.

The protein to E.coli YaaX.

This is an uncharacterized protein from Escherichia coli O157:H7.